The primary structure comprises 535 residues: MRLRNGTVATALVFVTSFLTLSWYTTWQNGKEKLIAYQREFLALKERLRVAEHRISQRSSELNTIVQQFRRAGAETNGSKTALSTISDNTIKLLKELTSKKSLRVPSIYYHLPHLLQNERSLQPAVQIGSGRTGVSIVMGIPTVKREVKSYLVETLHSLIDNLYPEEKLDCVIVVFIGETDLDYVHSVVANLEKEFSREISSGLLEIISPPESYYPDLTNLKETFGDSKERVRWRTKQNLDYCFLMMYAQEKGIYYIQLEDDIIVKQNYFNTIKNFALQLSSEEWMILEFSQLGFIGKMFQAPDLALVVEFILMFYKEKPIDWLLDHILWVKVCNPEKDAKHCDRQKANLRIRFRPSLFQHVGLHSSLSGKIQKLTDKDYMKPLLLKVHVNPPAEVSTSLKVYQGHTLEKTYMGEDFFWAITPTAGDYILFKFDKPVNVESYLFHSGNQEHPGDILLNTTVDVLPLKSDSLEISKETKDKRLEDGYFRIGKFEYGVAEGIVDPGLNPISAFRLSVIQNSAVWAILNEIHIKKVTS.

Residues 1-6 (MRLRNG) are Cytoplasmic-facing. A helical; Signal-anchor for type II membrane protein transmembrane segment spans residues 7-27 (TVATALVFVTSFLTLSWYTTW). A coiled-coil region spans residues 28-63 (QNGKEKLIAYQREFLALKERLRVAEHRISQRSSELN). Residues 28-535 (QNGKEKLIAY…NEIHIKKVTS (508 aa)) lie on the Lumenal side of the membrane. N-linked (GlcNAc...) asparagine glycans are attached at residues N77 and N458. S474 is subject to Phosphoserine.

This sequence belongs to the glycosyltransferase 54 family. It depends on a divalent metal cation as a cofactor. Post-translationally, N-glycosylated.

The protein localises to the golgi apparatus membrane. Its subcellular location is the secreted. It carries out the reaction N(4)-{beta-D-GlcNAc-(1-&gt;2)-alpha-D-Man-(1-&gt;3)-[beta-D-GlcNAc-(1-&gt;2)-alpha-D-Man-(1-&gt;6)]-beta-D-Man-(1-&gt;4)-beta-D-GlcNAc-(1-&gt;4)-beta-D-GlcNAc}-L-asparaginyl-[protein] + UDP-N-acetyl-alpha-D-glucosamine = N(4)-{beta-D-GlcNAc-(1-&gt;2)-[beta-D-GlcNAc-(1-&gt;4)]-alpha-D-Man-(1-&gt;3)-[beta-D-GlcNAc-(1-&gt;2)-alpha-D-Man-(1-&gt;6)]-beta-D-Man-(1-&gt;4)-beta-D-GlcNAc-(1-&gt;4)-beta-D-GlcNAc}-L-asparaginyl-[protein] + UDP + H(+). The enzyme catalyses an N(4)-{beta-D-GlcNAc-(1-&gt;2)-alpha-D-Man-(1-&gt;3)-[alpha-D-Man-(1-&gt;6)]-beta-D-Man-(1-&gt;4)-beta-D-GlcNAc-(1-&gt;4)-beta-D-GlcNAc}-L-asparaginyl-[protein] + UDP-N-acetyl-alpha-D-glucosamine = an N(4)-{beta-D-GlcNAc-(1-&gt;2)-[beta-D-GlcNAc-(1-&gt;4)]-alpha-D-Man-(1-&gt;3)-[alpha-D-Man-(1-&gt;6)]-beta-D-Man-(1-&gt;4)-beta-D-GlcNAc-(1-&gt;4)-beta-D-GlcNAc}-L-asparaginyl-[protein] + UDP + H(+). It catalyses the reaction an N(4)-{beta-D-GlcNAc-(1-&gt;2)-alpha-D-Man-(1-&gt;3)-[beta-D-GlcNAc-(1-&gt;2)-[beta-D-GlcNAc-(1-&gt;6)]-alpha-D-Man-(1-&gt;6)]-beta-D-Man-(1-&gt;4)-beta-D-GlcNAc-(1-&gt;4)-beta-D-GlcNAc}-L-asparaginyl-[protein] + UDP-N-acetyl-alpha-D-glucosamine = an N(4)-{beta-D-GlcNAc-(1-&gt;2)-[beta-D-GlcNAc-(1-&gt;4)]-alpha-D-Man-(1-&gt;3)-[beta-D-GlcNAc-(1-&gt;2)-[beta-D-GlcNAc-(1-&gt;6)]-alpha-D-Man-(1-&gt;6)]-beta-D-Man-(1-&gt;4)-beta-D-GlcNAc-(1-&gt;4)-beta-D-GlcNAc}-L-asparaginyl-[protein] + UDP + H(+). The catalysed reaction is an N(4)-{beta-D-GlcNAc-(1-&gt;2)-alpha-D-Man-(1-&gt;3)-[beta-D-GlcNAc-(1-&gt;2)-alpha-D-Man-(1-&gt;6)]-beta-D-Man-(1-&gt;4)-beta-D-GlcNAc-(1-&gt;4)-[alpha-L-Fuc-(1-&gt;6)]-beta-D-GlcNAc}-L-asparaginyl-[protein] + UDP-N-acetyl-alpha-D-glucosamine = N(4)-{beta-D-GlcNAc-(1-&gt;2)-[beta-D-GlcNAc-(1-&gt;4)]-alpha-D-Man-(1-&gt;3)-[beta-D-GlcNAc-(1-&gt;2)-alpha-D-Man-(1-&gt;6)]-beta-D-Man-(1-&gt;4)-beta-D-GlcNAc-(1-&gt;4)-[alpha-L-Fuc-(1-&gt;6)]-beta-D-GlcNAc}-asparaginyl-[protein] + UDP + H(+). It carries out the reaction an N(4)-{beta-D-GlcNAc-(1-&gt;2)-alpha-D-Man-(1-&gt;3)-[beta-D-Gal-(1-&gt;4)-beta-D-GlcNAc-(1-&gt;2)-alpha-D-Man-(1-&gt;6)]-beta-D-Man-(1-&gt;4)-beta-D-GlcNAc-(1-&gt;4)-beta-D-GlcNAc}-L-asparaginyl-[protein] + UDP-N-acetyl-alpha-D-glucosamine = an N(4)-{beta-D-GlcNAc-(1-&gt;2)-[beta-D-GlcNAc-(1-&gt;4)]-alpha-D-Man-(1-&gt;3)-[beta-D-Gal-(1-&gt;4)-beta-D-GlcNAc-(1-&gt;2)-alpha-D-Man-(1-&gt;6)]-beta-D-Man-(1-&gt;4)-beta-D-GlcNAc-(1-&gt;4)-beta-D-GlcNAc}-L-asparaginyl-[protein] + UDP + H(+). The enzyme catalyses N(4)-{beta-D-GlcNAc-(1-&gt;2)-alpha-D-Man-(1-&gt;3)-[alpha-D-Man-(1-&gt;3)-{alpha-D-Man-(1-&gt;6)}-alpha-D-Man-(1-&gt;6)]-beta-D-Man-(1-&gt;4)-beta-D-GlcNAc-(1-&gt;4)-beta-D-GlcNAc}-asparaginyl-[protein] + UDP-N-acetyl-alpha-D-glucosamine = N(4)-{beta-D-GlcNAc-(1-&gt;2)-[beta-D-GlcNAc-(1-&gt;4)]-alpha-D-Man-(1-&gt;3)-[alpha-D-Man-(1-&gt;3)-{alpha-D-Man-(1-&gt;6)}-alpha-D-Man-(1-&gt;6)]-beta-D-Man-(1-&gt;4)-beta-D-GlcNAc-(1-&gt;4)-beta-D-GlcNAc}-asparaginyl-[protein] + UDP + H(+). It catalyses the reaction N(4)-{beta-D-GlcNAc-(1-&gt;2)-alpha-D-Man-(1-&gt;3)-beta-D-Man-(1-&gt;4)-beta-D-GlcNAc-(1-&gt;4)-beta-D-GlcNAc}-asparaginyl-[protein] + UDP-N-acetyl-alpha-D-glucosamine = N(4)-{beta-D-GlcNAc-(1-&gt;2)-[beta-D-GlcNAc-(1-&gt;4)]-alpha-D-Man-(1-&gt;3)-beta-D-Man-(1-&gt;4)-beta-D-GlcNAc-(1-&gt;4)-beta-D-GlcNAc}-asparaginyl-[protein] + UDP + H(+). The protein operates within protein modification; protein glycosylation. Inhibited by UDP. Functionally, glycosyltransferase that catalyze the transfer of GlcNAc from UDP-GlcNAc to the GlcNAcbeta1-2Manalpha1-3 arm of the core structure of N-linked glycans through a beta1-4 linkage and participates in the production of tri- and tetra-antennary N-linked sugar chains. Involved in glucose transport by mediating SLC2A2/GLUT2 glycosylation, thereby controlling cell-surface expression of SLC2A2 in pancreatic beta cells. The sequence is that of Alpha-1,3-mannosyl-glycoprotein 4-beta-N-acetylglucosaminyltransferase A from Mus musculus (Mouse).